Reading from the N-terminus, the 429-residue chain is Adenylosuccinate synthetase (429 aa).

Residues 12-18 and 40-42 each bind GTP; these read GDEGKGK and GHT. The active-site Proton acceptor is the Asp-13. The Mg(2+) site is built by Asp-13 and Gly-40. IMP contacts are provided by residues 13-16, 38-41, Thr-129, Arg-143, Gln-223, Thr-238, and Arg-302; these read DEGK and NAGH. The active-site Proton donor is His-41. Substrate is bound at residue 298–304; the sequence is TVTGRKR. Residues Arg-304, 330–332, and 412–414 contribute to the GTP site; these read KLD and STS.

This sequence belongs to the adenylosuccinate synthetase family. Homodimer. The cofactor is Mg(2+).

Its subcellular location is the cytoplasm. It catalyses the reaction IMP + L-aspartate + GTP = N(6)-(1,2-dicarboxyethyl)-AMP + GDP + phosphate + 2 H(+). The protein operates within purine metabolism; AMP biosynthesis via de novo pathway; AMP from IMP: step 1/2. Plays an important role in the de novo pathway of purine nucleotide biosynthesis. Catalyzes the first committed step in the biosynthesis of AMP from IMP. This is Adenylosuccinate synthetase from Novosphingobium aromaticivorans (strain ATCC 700278 / DSM 12444 / CCUG 56034 / CIP 105152 / NBRC 16084 / F199).